Reading from the N-terminus, the 486-residue chain is Cytochrome P450 monooxygenase 1 (486 aa).

The signal sequence occupies residues 1–21 (MSHFLPTLILTSLTLVAYVLA). Asparagine 346 is a glycosylation site (N-linked (GlcNAc...) asparagine). Cysteine 430 serves as a coordination point for heme. An N-linked (GlcNAc...) asparagine glycan is attached at asparagine 434.

It belongs to the cytochrome P450 family. It depends on heme as a cofactor.

It functions in the pathway mycotoxin biosynthesis. In terms of biological role, cytochrome P450 monooxygenase; part of the gene cluster that mediates the biosynthesis of aphidicolin, a specific inhibitor of eukaryotic DNA synthesis and DNA polymerase alpha. The geranylgeranyl pyrophosphate synthase GGS is required for supplying a sufficient amount of geranylgeranyl diphosphate (GGDP), the general precursor of diterpenes. The diterpene synthase ACS then catalyzes the conversion of geranylgeranyl diphosphate to aphidicolan-16-beta-ol via the intermediate syn-copalyldiphosphate (syn-CDP). In addition to aphidicolan-16-beta-ol, the enzyme also produces low levels of amphidicol-15-ene and amphidicol-16-ene. The cytochrome P450 monooxygenase P450-2 then catalyzes the two-step hydroxylation from aphidicolan-16-beta-ol to 3-deoxyaphidicolin via a 17,3-deoxyaphidicolin intermediate. Finally, the cytochrome P450 monooxygenase P450-1 converts 3-deoxyaphidicolin to aphidicolin. The sequence is that of Cytochrome P450 monooxygenase 1 (PbP450-1) from Neocamarosporium betae (Beet black rot fungus).